Reading from the N-terminus, the 406-residue chain is Succinylornithine transaminase (406 aa).

Residue K252 is modified to N6-(pyridoxal phosphate)lysine.

Belongs to the class-III pyridoxal-phosphate-dependent aminotransferase family. AstC subfamily. Pyridoxal 5'-phosphate serves as cofactor.

The enzyme catalyses N(2)-succinyl-L-ornithine + 2-oxoglutarate = N-succinyl-L-glutamate 5-semialdehyde + L-glutamate. It functions in the pathway amino-acid degradation; L-arginine degradation via AST pathway; L-glutamate and succinate from L-arginine: step 3/5. Functionally, catalyzes the transamination of N(2)-succinylornithine and alpha-ketoglutarate into N(2)-succinylglutamate semialdehyde and glutamate. Can also act as an acetylornithine aminotransferase. The chain is Succinylornithine transaminase from Escherichia coli O7:K1 (strain IAI39 / ExPEC).